A 1160-amino-acid chain; its full sequence is Pesticidal crystal protein Cry1Db (1160 aa).

Belongs to the delta endotoxin family.

In terms of biological role, promotes colloidosmotic lysis by binding to the midgut epithelial cells of insects. The chain is Pesticidal crystal protein Cry1Db (cry1Db) from Bacillus thuringiensis.